The primary structure comprises 253 residues: MNILLSNDDGYHAEGIQTLATRLREAGHCVTVIAPDRNRSAASSCLTLMEPIRVHQLGTFDYSVIAGTPADCVHLALNGLFETSFDLVVSGINHGANLGDDVVYSGTVAAALEGRHLRLPSLAVSLVGKQSEGHLFGNNHFETAAQVVLDVLPKLVDMALPRQILNINVPDLPYSAIKGMLVTRLGQRSPSAEILKSQDPRGSTIYWLGENGSAIDNGEGTDFYALAHDYVSITPIHADMTAHHAIKVLSEML.

A divalent metal cation contacts are provided by D8, D9, S40, and N93.

This sequence belongs to the SurE nucleotidase family. Requires a divalent metal cation as cofactor.

It localises to the cytoplasm. It catalyses the reaction a ribonucleoside 5'-phosphate + H2O = a ribonucleoside + phosphate. In terms of biological role, nucleotidase that shows phosphatase activity on nucleoside 5'-monophosphates. The protein is 5'-nucleotidase SurE of Haemophilus ducreyi (strain 35000HP / ATCC 700724).